The following is a 366-amino-acid chain: Putative amino-acid transporter MJ1196 (366 aa).

The next 11 helical transmembrane spans lie at Ile14 to Gly34, Ile37 to Tyr57, Ile87 to Phe107, Phe111 to Gly131, Ile141 to Ile161, Ile173 to Leu193, Gly205 to Val225, Phe247 to Leu267, Ile291 to Ala311, Leu314 to Phe334, and Leu346 to Leu366.

It belongs to the amino acid-polyamine-organocation (APC) superfamily.

Its subcellular location is the cell membrane. In Methanocaldococcus jannaschii (strain ATCC 43067 / DSM 2661 / JAL-1 / JCM 10045 / NBRC 100440) (Methanococcus jannaschii), this protein is Putative amino-acid transporter MJ1196.